We begin with the raw amino-acid sequence, 91 residues long: MPRPTGKKFDKRRQQQNPLFKRKKFCRFTAAGVDHIDYKDLETLKDFIGENGKITPARLTGTKSHYQRQLDTAIKRARFLALVPYTDQHKA.

Belongs to the bacterial ribosomal protein bS18 family. As to quaternary structure, part of the 30S ribosomal subunit. Forms a tight heterodimer with protein bS6.

Functionally, binds as a heterodimer with protein bS6 to the central domain of the 16S rRNA, where it helps stabilize the platform of the 30S subunit. This chain is Small ribosomal subunit protein bS18, found in Paraburkholderia xenovorans (strain LB400).